A 470-amino-acid chain; its full sequence is MNPNQKIITIGSISLGLVVFNVLLHVVSIIVTVLVLGKGGNNGICNETVVREYNETVRIEKVTQWHNTNVVEYVPYWNGGTYMNNTEAICDAKGFAPFSKDNGIRIGSRGHIFVIREPFVSCSPIECRTFFLTQGSLLNDKHSNGTVKDRSPFRTLMSVEVGQSPNVYQARFEAVAWSATACHDGKKWMTVGVTGPDSKAVAVIHYGGVPTDVVNSWAGDILRTQESSCTCIQGDCYWVMTDGPANRQAQYRIYKANQGRIIGQTDISFNGGHIEECSCYPNDGKVECVCRDGWTGTNRPVLVISPDLSYRVGYLCAGIPSDTPRGEDTQFTGSCTSPMGNQGYGVKGFGFRQGTDVWMGRTISRTSRSGFEILRIKNGWTQTSKEQIRKQVVVDNLNWSGYSGSFTLPVELSGKDCLVPCFWVEMIRGKPEEKTIWTSSSSIVMCGVDYEVADWSWHDGAILPFDIDKM.

Residues 1 to 14 (MNPNQKIITIGSIS) lie on the Intravirion side of the membrane. Residues 11-32 (GSISLGLVVFNVLLHVVSIIVT) form an involved in apical transport and lipid raft association region. A helical membrane pass occupies residues 15–35 (LGLVVFNVLLHVVSIIVTVLV). The segment at 32–86 (TVLVLGKGGNNGICNETVVREYNETVRIEKVTQWHNTNVVEYVPYWNGGTYMNNT) is hypervariable stalk region. The Virion surface segment spans residues 36–470 (LGKGGNNGIC…AILPFDIDKM (435 aa)). N-linked (GlcNAc...) asparagine; by host glycans are attached at residues N46, N54, and N84. The segment at 89–470 (ICDAKGFAPF…AILPFDIDKM (382 aa)) is head of neuraminidase. 8 disulfides stabilise this stretch: C90–C417, C122–C127, C182–C229, C231–C236, C277–C290, C279–C288, C316–C335, and C421–C446. R116 contacts substrate. An N-linked (GlcNAc...) asparagine; by host glycan is attached at N144. D149 functions as the Proton donor/acceptor in the catalytic mechanism. R150 is a binding site for substrate. 275–276 (EE) contacts substrate. R291 contributes to the substrate binding site. 3 residues coordinate Ca(2+): D292, G296, and D322. A substrate-binding site is contributed by R368. Residue N398 is glycosylated (N-linked (GlcNAc...) asparagine; by host). Y402 acts as the Nucleophile in catalysis.

The protein belongs to the glycosyl hydrolase 34 family. As to quaternary structure, homotetramer. It depends on Ca(2+) as a cofactor. N-glycosylated.

The protein localises to the virion membrane. Its subcellular location is the host apical cell membrane. It catalyses the reaction Hydrolysis of alpha-(2-&gt;3)-, alpha-(2-&gt;6)-, alpha-(2-&gt;8)- glycosidic linkages of terminal sialic acid residues in oligosaccharides, glycoproteins, glycolipids, colominic acid and synthetic substrates.. Inhibited by the neuraminidase inhibitors zanamivir (Relenza) and oseltamivir (Tamiflu). These drugs interfere with the release of progeny virus from infected cells and are effective against all influenza strains. Resistance to neuraminidase inhibitors is quite rare. Catalyzes the removal of terminal sialic acid residues from viral and cellular glycoconjugates. Cleaves off the terminal sialic acids on the glycosylated HA during virus budding to facilitate virus release. Additionally helps virus spread through the circulation by further removing sialic acids from the cell surface. These cleavages prevent self-aggregation and ensure the efficient spread of the progeny virus from cell to cell. Otherwise, infection would be limited to one round of replication. Described as a receptor-destroying enzyme because it cleaves a terminal sialic acid from the cellular receptors. May facilitate viral invasion of the upper airways by cleaving the sialic acid moieties on the mucin of the airway epithelial cells. Likely to plays a role in the budding process through its association with lipid rafts during intracellular transport. May additionally display a raft-association independent effect on budding. Plays a role in the determination of host range restriction on replication and virulence. Sialidase activity in late endosome/lysosome traffic seems to enhance virus replication. This chain is Neuraminidase, found in Influenza A virus (strain A/Duck/Ukraine/1/1963 H3N8).